A 196-amino-acid polypeptide reads, in one-letter code: ATP-dependent Clp protease proteolytic subunit (196 aa).

S101 functions as the Nucleophile in the catalytic mechanism. Residue H126 is part of the active site.

The protein belongs to the peptidase S14 family. In terms of assembly, component of the chloroplastic Clp protease core complex.

The protein resides in the plastid. It localises to the chloroplast stroma. It catalyses the reaction Hydrolysis of proteins to small peptides in the presence of ATP and magnesium. alpha-casein is the usual test substrate. In the absence of ATP, only oligopeptides shorter than five residues are hydrolyzed (such as succinyl-Leu-Tyr-|-NHMec, and Leu-Tyr-Leu-|-Tyr-Trp, in which cleavage of the -Tyr-|-Leu- and -Tyr-|-Trp bonds also occurs).. Cleaves peptides in various proteins in a process that requires ATP hydrolysis. Has a chymotrypsin-like activity. Plays a major role in the degradation of misfolded proteins. The polypeptide is ATP-dependent Clp protease proteolytic subunit (Pleurastrum terricola (Filamentous green alga)).